A 921-amino-acid polypeptide reads, in one-letter code: Isoleucine--tRNA ligase (921 aa).

The 'HIGH' region motif lies at 57-67 (PYANGDIHMGH). Glutamate 552 lines the L-isoleucyl-5'-AMP pocket. A 'KMSKS' region motif is present at residues 593-597 (KMSKS). Lysine 596 is an ATP binding site. Residues cysteine 888, cysteine 891, cysteine 908, and cysteine 911 each contribute to the Zn(2+) site.

Belongs to the class-I aminoacyl-tRNA synthetase family. IleS type 1 subfamily. In terms of assembly, monomer. Requires Zn(2+) as cofactor.

Its subcellular location is the cytoplasm. It carries out the reaction tRNA(Ile) + L-isoleucine + ATP = L-isoleucyl-tRNA(Ile) + AMP + diphosphate. Catalyzes the attachment of isoleucine to tRNA(Ile). As IleRS can inadvertently accommodate and process structurally similar amino acids such as valine, to avoid such errors it has two additional distinct tRNA(Ile)-dependent editing activities. One activity is designated as 'pretransfer' editing and involves the hydrolysis of activated Val-AMP. The other activity is designated 'posttransfer' editing and involves deacylation of mischarged Val-tRNA(Ile). The polypeptide is Isoleucine--tRNA ligase (Bacillus cytotoxicus (strain DSM 22905 / CIP 110041 / 391-98 / NVH 391-98)).